The chain runs to 419 residues: 3-isopropylmalate dehydratase large subunit (419 aa).

3 residues coordinate [4Fe-4S] cluster: cysteine 300, cysteine 360, and cysteine 363.

This sequence belongs to the aconitase/IPM isomerase family. LeuC type 2 subfamily. Heterodimer of LeuC and LeuD. Requires [4Fe-4S] cluster as cofactor.

It catalyses the reaction (2R,3S)-3-isopropylmalate = (2S)-2-isopropylmalate. It functions in the pathway amino-acid biosynthesis; L-leucine biosynthesis; L-leucine from 3-methyl-2-oxobutanoate: step 2/4. Its function is as follows. Catalyzes the isomerization between 2-isopropylmalate and 3-isopropylmalate, via the formation of 2-isopropylmaleate. The sequence is that of 3-isopropylmalate dehydratase large subunit from Clostridium beijerinckii (strain ATCC 51743 / NCIMB 8052) (Clostridium acetobutylicum).